A 165-amino-acid polypeptide reads, in one-letter code: Phosphopantetheine adenylyltransferase (165 aa).

Thr-9 is a binding site for substrate. ATP-binding positions include 9–10 (TF) and His-17. Substrate-binding residues include Lys-41, Leu-73, and Arg-87. ATP-binding positions include 88 to 90 (GLR), Glu-98, and 123 to 129 (YQFISGT).

The protein belongs to the bacterial CoaD family. In terms of assembly, homohexamer. It depends on Mg(2+) as a cofactor.

The protein localises to the cytoplasm. It catalyses the reaction (R)-4'-phosphopantetheine + ATP + H(+) = 3'-dephospho-CoA + diphosphate. Its pathway is cofactor biosynthesis; coenzyme A biosynthesis; CoA from (R)-pantothenate: step 4/5. Its function is as follows. Reversibly transfers an adenylyl group from ATP to 4'-phosphopantetheine, yielding dephospho-CoA (dPCoA) and pyrophosphate. This Burkholderia orbicola (strain MC0-3) protein is Phosphopantetheine adenylyltransferase.